The primary structure comprises 126 residues: MSTTRRRRPALVALVTIAACGCLALGWWQWTRFQSASGTFQNLGYALQWPLFAGFCLYTYHNFVRYEESPPQPRHMNCIAEIPPELLPARPKPEQQPPDDPALRKYNTYLAELAKQDAENHNRTTT.

Positions 1 to 19 (MSTTRRRRPALVALVTIAA) are cleaved as a signal peptide. A lipid anchor (N-palmitoyl cysteine) is attached at Cys20. The S-diacylglycerol cysteine moiety is linked to residue Cys20. Residues 44–64 (GYALQWPLFAGFCLYTYHNFV) traverse the membrane as a helical segment.

The protein to M.tuberculosis Rv1343c.

The protein localises to the cell membrane. In Mycobacterium leprae (strain TN), this protein is Putative lipoprotein LprD (lprD).